Consider the following 365-residue polypeptide: Probable protein kinase At2g41970 (365 aa).

The disordered stretch occupies residues 1 to 50 (MFCCGGADEEPAGPPANQYAAPPNKAGNPNFGGGNRGEPRNPNAPRSGAP). Residues 73 to 354 (FGNKALIGEG…IVVKALQPLL (282 aa)) form the Protein kinase domain. ATP-binding positions include 79–87 (IGEGSYGRV) and Lys100. The residue at position 146 (Tyr146) is a Phosphotyrosine. Asp204 serves as the catalytic Proton acceptor. Ser208 and Ser238 each carry phosphoserine. A phosphothreonine mark is found at Thr239 and Thr244. Tyr252 is subject to Phosphotyrosine.

The protein belongs to the protein kinase superfamily. Tyr protein kinase family.

The protein is Probable protein kinase At2g41970 of Arabidopsis thaliana (Mouse-ear cress).